The chain runs to 203 residues: Ribosome maturation factor RimP (203 aa).

Residues 1–21 are compositionally biased toward polar residues; sequence MSDSEATTSTDRSESNSTATI. The segment at 1–23 is disordered; it reads MSDSEATTSTDRSESNSTATIHN.

Belongs to the RimP family.

Its subcellular location is the cytoplasm. Required for maturation of 30S ribosomal subunits. This is Ribosome maturation factor RimP from Paenarthrobacter aurescens (strain TC1).